The sequence spans 46 residues: Major cold shock protein (46 aa).

In terms of domain architecture, CSD spans Asp1–Lys46.

Homodimer.

Its subcellular location is the cytoplasm. The protein is Major cold shock protein (cspA) of Yersinia enterocolitica.